We begin with the raw amino-acid sequence, 240 residues long: Proteasome subunit beta type-1 (240 aa).

An N-acetylmethionine modification is found at Met1. Residues 1 to 27 constitute a propeptide that is removed on maturation; that stretch reads MLSTAAYRDVERELGMGPHGSAGPVQL. Ser57 carries O-linked (GlcNAc) serine glycosylation. Phosphoserine occurs at positions 61 and 67. The residue at position 149 (Tyr149) is a Phosphotyrosine. Ser161 is subject to Phosphoserine. N6-acetyllysine is present on Lys203. O-linked (GlcNAc) serine glycosylation occurs at Ser208.

This sequence belongs to the peptidase T1B family. In terms of assembly, the 26S proteasome consists of a 20S proteasome core and two 19S regulatory subunits. The 20S proteasome core is a barrel-shaped complex made of 28 subunits that are arranged in four stacked rings. The two outer rings are each formed by seven alpha subunits, and the two inner rings are formed by seven beta subunits. The proteolytic activity is exerted by three beta-subunits PSMB5, PSMB6 and PSMB7. Interacts with SERPINB2. Interacts with RFPL4A. As to expression, detected in liver (at protein level).

The protein resides in the cytoplasm. The protein localises to the nucleus. Functionally, non-catalytic component of the 20S core proteasome complex involved in the proteolytic degradation of most intracellular proteins. This complex plays numerous essential roles within the cell by associating with different regulatory particles. Associated with two 19S regulatory particles, forms the 26S proteasome and thus participates in the ATP-dependent degradation of ubiquitinated proteins. The 26S proteasome plays a key role in the maintenance of protein homeostasis by removing misfolded or damaged proteins that could impair cellular functions, and by removing proteins whose functions are no longer required. Associated with the PA200 or PA28, the 20S proteasome mediates ubiquitin-independent protein degradation. This type of proteolysis is required in several pathways including spermatogenesis (20S-PA200 complex) or generation of a subset of MHC class I-presented antigenic peptides (20S-PA28 complex). The sequence is that of Proteasome subunit beta type-1 (Psmb1) from Mus musculus (Mouse).